Here is a 75-residue protein sequence, read N- to C-terminus: MSSGALTKPQMRGLLAKRLRFHIVGAFAVSLGVAAFYKFAVAEPRKKAYADFYRNYDSMKDFEEMRKAGIFQSAK.

The Mitochondrial matrix segment spans residues 1 to 13 (MSSGALTKPQMRG). The chain crosses the membrane as a helical span at residues 14-54 (LLAKRLRFHIVGAFAVSLGVAAFYKFAVAEPRKKAYADFYR). The Mitochondrial intermembrane segment spans residues 55–75 (NYDSMKDFEEMRKAGIFQSAK).

The protein belongs to the cytochrome c oxidase subunit 6c family. As to quaternary structure, component of the cytochrome c oxidase (complex IV, CIV), a multisubunit enzyme composed of 14 subunits. The complex is composed of a catalytic core of 3 subunits MT-CO1, MT-CO2 and MT-CO3, encoded in the mitochondrial DNA, and 11 supernumerary subunits COX4I, COX5A, COX5B, COX6A, COX6B, COX6C, COX7A, COX7B, COX7C, COX8 and NDUFA4, which are encoded in the nuclear genome. The complex exists as a monomer or a dimer and forms supercomplexes (SCs) in the inner mitochondrial membrane with NADH-ubiquinone oxidoreductase (complex I, CI) and ubiquinol-cytochrome c oxidoreductase (cytochrome b-c1 complex, complex III, CIII), resulting in different assemblies (supercomplex SCI(1)III(2)IV(1) and megacomplex MCI(2)III(2)IV(2)).

Its subcellular location is the mitochondrion inner membrane. Its pathway is energy metabolism; oxidative phosphorylation. In terms of biological role, component of the cytochrome c oxidase, the last enzyme in the mitochondrial electron transport chain which drives oxidative phosphorylation. The respiratory chain contains 3 multisubunit complexes succinate dehydrogenase (complex II, CII), ubiquinol-cytochrome c oxidoreductase (cytochrome b-c1 complex, complex III, CIII) and cytochrome c oxidase (complex IV, CIV), that cooperate to transfer electrons derived from NADH and succinate to molecular oxygen, creating an electrochemical gradient over the inner membrane that drives transmembrane transport and the ATP synthase. Cytochrome c oxidase is the component of the respiratory chain that catalyzes the reduction of oxygen to water. Electrons originating from reduced cytochrome c in the intermembrane space (IMS) are transferred via the dinuclear copper A center (CU(A)) of subunit 2 and heme A of subunit 1 to the active site in subunit 1, a binuclear center (BNC) formed by heme A3 and copper B (CU(B)). The BNC reduces molecular oxygen to 2 water molecules using 4 electrons from cytochrome c in the IMS and 4 protons from the mitochondrial matrix. This chain is Cytochrome c oxidase subunit 6C (COX6C), found in Carlito syrichta (Philippine tarsier).